A 6548-amino-acid polypeptide reads, in one-letter code: Epiplakin (6548 aa).

Position 33 is a phosphothreonine (T33). Plectin repeat units lie at residues 41-78 (AALP…TGLG), 79-116 (LTLL…LELK), 117-154 (EKLL…RTLG), 155-192 (WRLL…KETW), 285-322 (RRYL…KGIA), 323-360 (LQLL…PELH), 362-398 (QLLV…QPLA), 399-436 (LRLL…EETR), and 437-470 (QRLS…PETG). The tract at residues 49–1123 (SIAGVYVEAS…KASGLHLLPL (1075 aa)) is interaction with KRT5. Positions 545–565 (SVEELAAELKNIVEQAAATAK) form a coiled coil. Plectin repeat units lie at residues 611–648 (QRYL…PGTA), 649–686 (LILL…PDVY), 687–724 (AKLL…RDHG), 725–762 (IRLL…QILN), and 766–800 (LDPS…SETG). The stretch at 851–886 (TEDRRRQLLQRYRQRKITLEQVTQLLEKEMRRWTDI) forms a coiled coil. Plectin repeat units lie at residues 931–968 (HRYL…PSTA), 969–1006 (LALL…AEVY), 1007–1044 (GKLK…VEQA), 1224–1284 (QETL…TGLG), 1285–1322 (QQLL…MEQS), 1323–1360 (EHLR…QSEA), 1361–1398 (FPLL…EQTS), and 1402–1436 (TATG…ADTG). Position 1551 is a phosphothreonine (T1551). Plectin repeat units lie at residues 1572–1609 (RRSL…PGTA), 1610–1647 (LVLL…KETY), 1648–1685 (MKLL…RDHG), 1686–1723 (IRLL…EEMN), and 1727–1761 (SDPS…PETG). The interval 1580 to 6545 (FIAGVLIQDT…PETGLLFLSL (4966 aa)) is interaction with KRT5. Residues 1819-1851 (RKLLREYRAQNIGLENLLEVITSTVEETEKQSQ) are a coiled coil. Plectin repeat units follow at residues 1898-1935 (RVYL…AGFA), 1936-1973 (AQML…EDLR), 1974-2011 (ERLV…REEA), 2012-2049 (LRLL…DDSL), 2225-2267 (KRYL…PGTA), 2268-2305 (LVLL…GEIQ), 2306-2343 (EKLL…RDHG), 2344-2381 (IRLL…EDMN), and 2385-2419 (ADPG…PETG). S2430 and S2508 each carry phosphoserine. The interval 2578–2626 (AEETQESKPKPRDASLKQQDTGARGSGTSPDEGDAQDSSESARQQQEQT) is disordered. Basic and acidic residues predominate over residues 2582–2592 (QESKPKPRDAS). Composition is skewed to polar residues over residues 2593–2606 (LKQQ…SGTS) and 2615–2626 (SSESARQQQEQT). 5 Plectin repeats span residues 2740-2782 (KRYL…PGTA), 2783-2820 (LVLL…GEIQ), 2821-2858 (EKLL…RDHG), 2859-2896 (IRLL…EDMN), and 2900-2934 (ADPG…PETG). Positions 2748–2940 (CIAGVLVPVQ…PETGFYMLQL (193 aa)) are interaction with KRT14. Residues 3093–3144 (AEETQESKPKPRDASLKQQDTGARGSGTSPDEGDAQDSSESARQQQEQTLRA) form a disordered region. Over residues 3097-3107 (QESKPKPRDAS) the composition is skewed to basic and acidic residues. Composition is skewed to polar residues over residues 3108–3121 (LKQQ…SGTS) and 3130–3144 (SSES…TLRA). S3220 carries the post-translational modification Phosphoserine. Plectin repeat units lie at residues 3255-3297 (KRYL…PGTA), 3298-3335 (LVLL…GEIQ), 3336-3373 (EKLL…RDHG), 3374-3411 (IRLL…EDMN), and 3415-3449 (ADPG…PETG). S3460 and S3538 each carry phosphoserine. The segment at 3608–3659 (AEETQESKPKPRDASLKQQDTGARGSGTSPDEGDAQDSSESARQQQEQTLRA) is disordered. Residues 3612–3622 (QESKPKPRDAS) show a composition bias toward basic and acidic residues. Polar residues-rich tracts occupy residues 3623–3636 (LKQQ…SGTS) and 3645–3659 (SSES…TLRA). S3735 carries the phosphoserine modification. Plectin repeat units follow at residues 3770 to 3812 (KRYL…PGTA), 3813 to 3850 (LVLL…GEIQ), 3851 to 3888 (EKLL…RDHG), 3889 to 3926 (IRLL…EDMN), and 3930 to 3964 (ADPG…PETG). A phosphoserine mark is found at S3975 and S4053. A disordered region spans residues 4123 to 4174 (AEETQESKPKPRDASLKQQDTGARGSGTSPDEGDAQDSSESARQQQEQTLRA). Over residues 4127–4137 (QESKPKPRDAS) the composition is skewed to basic and acidic residues. 2 stretches are compositionally biased toward polar residues: residues 4138 to 4151 (LKQQ…SGTS) and 4160 to 4174 (SSES…TLRA). Plectin repeat units lie at residues 4285–4327 (KRYL…PGTA), 4328–4365 (LVLL…GEIQ), 4366–4403 (EKLL…RDHG), 4404–4441 (IRLL…EDMN), and 4445–4479 (ADPG…PETG). Residues 4638-4689 (AEETQESKPKPRDASLKQQDTGARGSGTSPDEGDAQDSSESARQQQEQTLRA) form a disordered region. A compositionally biased stretch (basic and acidic residues) spans 4642–4652 (QESKPKPRDAS). Composition is skewed to polar residues over residues 4653 to 4666 (LKQQ…SGTS) and 4675 to 4689 (SSES…TLRA). The residue at position 4765 (S4765) is a Phosphoserine. Plectin repeat units follow at residues 4800–4842 (KRYL…PGTA), 4843–4880 (LVLL…GEIQ), 4881–4918 (EKLL…RDHG), 4919–4956 (IRLL…EDMN), and 4960–4994 (ADPG…PETG). Phosphoserine occurs at positions 5005 and 5083. Residues 5153-5204 (AEETQESKPKPRDASLKQQDTGARGSGTSPDEGDAQDSSESARQQQEQTLRA) are disordered. The span at 5157–5167 (QESKPKPRDAS) shows a compositional bias: basic and acidic residues. Composition is skewed to polar residues over residues 5168-5181 (LKQQ…SGTS) and 5190-5204 (SSES…TLRA). Plectin repeat units follow at residues 5315-5357 (KRYL…PGTA), 5358-5395 (LVLL…GEIQ), 5396-5433 (EKLL…RDHG), 5434-5471 (IRLL…EDMN), and 5475-5509 (ADPG…PETG). The disordered stretch occupies residues 5668 to 5719 (AEETQESKPKPRDASLKQQDTGARGSGTSPDEGDAQDSSESARQQQEQTLRA). Residues 5672-5682 (QESKPKPRDAS) are compositionally biased toward basic and acidic residues. Composition is skewed to polar residues over residues 5683-5696 (LKQQ…SGTS) and 5705-5719 (SSES…TLRA). Phosphoserine is present on S5795. Plectin repeat units lie at residues 5830–5872 (KRYL…PGTA), 5873–5910 (LVLL…GEIQ), 5911–5948 (EKLL…RDHG), 5949–5986 (IRLL…EDMN), and 5990–6024 (ADPG…PETG). Residues S6035 and S6113 each carry the phosphoserine modification. The disordered stretch occupies residues 6183–6234 (AEETQESKPKPRDASLKQQDTGARGSGTSPDEGDAQDSSESARQQQEQTLRA). The segment covering 6187 to 6197 (QESKPKPRDAS) has biased composition (basic and acidic residues). 2 stretches are compositionally biased toward polar residues: residues 6198-6211 (LKQQ…SGTS) and 6220-6234 (SSES…TLRA). S6310 is modified (phosphoserine). 5 Plectin repeats span residues 6345 to 6387 (KRYL…PGTA), 6388 to 6425 (LVLL…GEIQ), 6426 to 6463 (EKLL…KNHG), 6464 to 6501 (IRLL…QEMN), and 6505 to 6539 (ADPG…PETG).

It belongs to the plakin or cytolinker family. As to quaternary structure, interacts with KRT5, KRT14 and KRT5/KRT14 heterotetramer; interacts preferentially with assembled filaments rather than keratin monomers. Interacts with KRT8 and KRT18 and KRT8/KRT18 heterotetramer; interacts preferentially with assembled filaments rather than keratin monomers. Interacts with KRT1, VIM and DES; interaction is stronger with KRT1 than with VIM or DES; interaction is dependent of higher-order structure of intermediate filament. As to expression, high levels in skin, small intestine and salivary gland. Lower levels in lung, uterus and liver. Not detected in brain, kidney, muscle, heart or spleen. In skin, expressed in all epidermal layers but not in the dermis. In intestine, expressed exclusively in the epithelial cell layer of the villi. In liver, expressed at hepatocyte margins. Around the region of the wound, expressed in the upper half of the epidermis. Weakly expressed on the basilar side of the suprabasal layer of the epidermis at the wound's edge. Expressed strongly in the upper layer of the epidermis, especially in larger keratinocytes. Expressed in undifferentiated primary keratinocytes. Strongly expressed in ductal cells, and also expressed in acinar cells. Expressed in hepatocytes and cholangiocytes.

It localises to the cytoplasm. Its subcellular location is the cytoskeleton. It is found in the apicolateral cell membrane. The protein resides in the basolateral cell membrane. The protein localises to the cell junction. It localises to the hemidesmosome. Its subcellular location is the tight junction. It is found in the cell projection. In terms of biological role, cytoskeletal linker protein that connects to intermediate filaments and controls their reorganization in response to stress. In response to mechanical stress like wound healing, is associated with the machinery for cellular motility by slowing down keratinocyte migration and proliferation and accelerating keratin bundling in proliferating keratinocytes thus contributing to tissue architecture. However in wound healing in corneal epithelium also positively regulates cell differentiation and proliferation and negatively regulates migration thereby controlling corneal epithelium morphogenesis and integrity. In response to cellular stress, plays a role in keratin filament reorganization, probably by protecting keratin filaments against disruption. During liver and pancreas injuries, plays a protective role by chaperoning disease-induced intermediate filament reorganization. The protein is Epiplakin of Mus musculus (Mouse).